The chain runs to 221 residues: Alpha-ketoglutarate-dependent dioxygenase alkB homolog 7, mitochondrial (221 aa).

Residues methionine 1–alanine 23 constitute a mitochondrion transit peptide. Fe cation is bound by residues histidine 121 and aspartate 123. Position 165 (tyrosine 165) interacts with 2-oxoglutarate. Histidine 177 contributes to the Fe cation binding site. 2-oxoglutarate is bound by residues arginine 197 to serine 199 and arginine 203.

The protein belongs to the alkB family. Fe(2+) is required as a cofactor.

Its subcellular location is the mitochondrion matrix. Functionally, may function as protein hydroxylase; can catalyze auto-hydroxylation at Leu-110 (in vitro), but this activity may be due to the absence of the true substrate. Required to induce programmed necrosis in response to DNA damage caused by cytotoxic alkylating agents. Acts by triggering the collapse of mitochondrial membrane potential and loss of mitochondrial function that leads to energy depletion and cell death. ALKBH7-mediated necrosis is probably required to prevent the accumulation of cells with DNA damage. Does not display DNA demethylase activity. Involved in fatty acid metabolism. This chain is Alpha-ketoglutarate-dependent dioxygenase alkB homolog 7, mitochondrial (ALKBH7), found in Bos taurus (Bovine).